The sequence spans 44 residues: Photosystem I reaction center subunit IX (44 aa).

A helical transmembrane segment spans residues 9–29 (YMRSAPVVAAAWITMTAGIII).

Belongs to the PsaJ family.

Its subcellular location is the cellular thylakoid membrane. Functionally, may help in the organization of the PsaE and PsaF subunits. The protein is Photosystem I reaction center subunit IX of Prochlorococcus marinus (strain MIT 9312).